A 219-amino-acid chain; its full sequence is uncharacterized protein (219 aa).

The protein to T.pallidum TP_0126.

This is an uncharacterized protein from Treponema pallidum (strain Nichols).